The chain runs to 197 residues: uncharacterized protein (197 aa).

The segment covering 1 to 10 (MKNNYTSLKS) has biased composition (polar residues). 2 disordered regions span residues 1–46 (MKNN…PPYS) and 54–73 (LVPEDSSTGPTETANPNVER). Positions 18–37 (LKTGHEIDLEKGPLPEHNSE) are enriched in basic and acidic residues. Positions 58–69 (DSSTGPTETANP) are enriched in polar residues. Helical transmembrane passes span 83–105 (NIYSLLRLLIAVLAVSVVFFTAW) and 120–142 (AFFVLIGLTCLILLITMILEPGL).

This sequence belongs to the WTF family.

The protein localises to the endoplasmic reticulum membrane. This is an uncharacterized protein from Schizosaccharomyces pombe (strain 972 / ATCC 24843) (Fission yeast).